A 277-amino-acid polypeptide reads, in one-letter code: Large ribosomal subunit protein uL2 (277 aa).

Residues 219–277 (RPQTRGSAMNPVDHPHGGGEGKKNSGRHPVTPWGKPTKGAKTRRKKASDKLIISRRKGK) are disordered. The segment covering 231–241 (DHPHGGGEGKK) has biased composition (basic and acidic residues). Positions 256-277 (KGAKTRRKKASDKLIISRRKGK) are enriched in basic residues.

This sequence belongs to the universal ribosomal protein uL2 family. As to quaternary structure, part of the 50S ribosomal subunit. Forms a bridge to the 30S subunit in the 70S ribosome.

Its function is as follows. One of the primary rRNA binding proteins. Required for association of the 30S and 50S subunits to form the 70S ribosome, for tRNA binding and peptide bond formation. It has been suggested to have peptidyltransferase activity; this is somewhat controversial. Makes several contacts with the 16S rRNA in the 70S ribosome. The sequence is that of Large ribosomal subunit protein uL2 from Campylobacter curvus (strain 525.92).